Here is a 389-residue protein sequence, read N- to C-terminus: Flap endonuclease 1 (389 aa).

Residues 1-105 form an N-domain region; the sequence is MGIKGLNKLL…GELAKRKERR (105 aa). Residue Asp34 participates in Mg(2+) binding. The DNA site is built by Arg47 and Arg71. Mg(2+)-binding residues include Asp87, Glu170, Glu172, Asp191, and Asp193. Residues 134–265 form an I-domain region; it reads DVTRFEKRTV…QTALKLMKEH (132 aa). Residue Glu170 coordinates DNA. Residues Gly243 and Asp245 each coordinate DNA. Residue Asp245 coordinates Mg(2+). The interval 351 to 359 is interaction with PCNA; that stretch reads PQARLDGFF. The interval 360 to 389 is disordered; it reads KVMPKEGGEKRKADDKKTKGKKPATKKAKK. The segment covering 362–376 has biased composition (basic and acidic residues); that stretch reads MPKEGGEKRKADDKK. A compositionally biased stretch (basic residues) spans 377-389; it reads TKGKKPATKKAKK.

This sequence belongs to the XPG/RAD2 endonuclease family. FEN1 subfamily. As to quaternary structure, interacts with PCNA. Three molecules of FEN1 bind to one PCNA trimer with each molecule binding to one PCNA monomer. PCNA stimulates the nuclease activity without altering cleavage specificity. Requires Mg(2+) as cofactor. Phosphorylated. Phosphorylation upon DNA damage induces relocalization to the nuclear plasma.

The protein localises to the nucleus. It is found in the nucleolus. It localises to the nucleoplasm. The protein resides in the mitochondrion. Its function is as follows. Structure-specific nuclease with 5'-flap endonuclease and 5'-3' exonuclease activities involved in DNA replication and repair. During DNA replication, cleaves the 5'-overhanging flap structure that is generated by displacement synthesis when DNA polymerase encounters the 5'-end of a downstream Okazaki fragment. It enters the flap from the 5'-end and then tracks to cleave the flap base, leaving a nick for ligation. Also involved in the long patch base excision repair (LP-BER) pathway, by cleaving within the apurinic/apyrimidinic (AP) site-terminated flap. Acts as a genome stabilization factor that prevents flaps from equilibrating into structures that lead to duplications and deletions. Also possesses 5'-3' exonuclease activity on nicked or gapped double-stranded DNA, and exhibits RNase H activity. Also involved in replication and repair of rDNA and in repairing mitochondrial DNA. The polypeptide is Flap endonuclease 1 (Yarrowia lipolytica (strain CLIB 122 / E 150) (Yeast)).